Here is a 379-residue protein sequence, read N- to C-terminus: F-box/kelch-repeat protein At4g33900 (379 aa).

In terms of domain architecture, F-box spans 9-55 (IKRFLMLPDDLVFNCLARVSRLHYPTLSLVSKKFRFLLASKELYQTR). Kelch repeat units follow at residues 116–175 (EIYA…TLDG), 176–222 (RIYV…LSIS), and 262–308 (SCCV…RNFK).

This chain is F-box/kelch-repeat protein At4g33900, found in Arabidopsis thaliana (Mouse-ear cress).